The chain runs to 147 residues: Succinate dehydrogenase assembly factor 2, mitochondrial (147 aa).

It belongs to the SDHAF2 family. As to quaternary structure, interacts with the flavoprotein subunit within the SDH catalytic dimer.

The protein resides in the mitochondrion matrix. Plays an essential role in the assembly of succinate dehydrogenase (SDH), an enzyme complex (also referred to as respiratory complex II) that is a component of both the tricarboxylic acid (TCA) cycle and the mitochondrial electron transport chain, and which couples the oxidation of succinate to fumarate with the reduction of ubiquinone (coenzyme Q) to ubiquinol. Required for flavinylation (covalent attachment of FAD) of the flavoprotein subunit of the SDH catalytic dimer. The sequence is that of Succinate dehydrogenase assembly factor 2, mitochondrial from Drosophila grimshawi (Hawaiian fruit fly).